Here is an 84-residue protein sequence, read N- to C-terminus: RNA-binding protein Hfq (84 aa).

The Sm domain maps to 10 to 70 (DNVLNQVRKN…VSTIIPGKTL (61 aa)).

The protein belongs to the Hfq family. As to quaternary structure, homohexamer.

RNA chaperone that binds small regulatory RNA (sRNAs) and mRNAs to facilitate mRNA translational regulation in response to envelope stress, environmental stress and changes in metabolite concentrations. Also binds with high specificity to tRNAs. The polypeptide is RNA-binding protein Hfq (Natranaerobius thermophilus (strain ATCC BAA-1301 / DSM 18059 / JW/NM-WN-LF)).